Reading from the N-terminus, the 102-residue chain is Protein translation factor SUI1 homolog (102 aa).

Belongs to the SUI1 family.

The protein is Protein translation factor SUI1 homolog of Methanosarcina mazei (strain ATCC BAA-159 / DSM 3647 / Goe1 / Go1 / JCM 11833 / OCM 88) (Methanosarcina frisia).